The primary structure comprises 529 residues: MRGLSYFVLALSAIDAAAAASLPFLRSLQHVGRRDPAARNLPNYDFSAIPPVEKRQTASRLNGKTKKYAVDGTKIPEVQFDIGESYAGLMPISTRKDESRELYFWYFPSENPAAKDEITIWLNGGPGCSSLEGLLQENGPFLWQYGTLYPVPNPWSWTKLTNMVWVEQYNPTDDNPSRPVGTGFSQGKPSVRSQEDVATQFLGFFRNFVDTFDLHGKKIYIVGESYAGLYVPYIAHAMFEKKNKRYFNVESTMIFDPSINKDEILTQVPAVPFVEHWKGLFPFNETFTKQIHDMADKCGYSSYMKEHLVYPPKGKLPALPKATPECDVWTAIFDAVSLVNPCFDVYQVATTCPLLYDVLGYPGSFEYLPAGANVYFNRTDVQKAINAPLQKWTECSERPVFVDGKDNSEPSSFTIIPDVIEKSPRTIIAHGDLDYVLISNGTLLSIQNMTWGGAQGFSQEPSKPLFVPYHDRGSLSTLSGAGVLGRHHTERKLTYVELYLTGHMGPQYNPSASYRILEYLLGRIDDLSK.

An N-terminal signal peptide occupies residues 1-19; it reads MRGLSYFVLALSAIDAAAA. Positions 171-191 are disordered; that stretch reads PTDDNPSRPVGTGFSQGKPSV. Ser-225 is an active-site residue. Residues Asn-284 and Asn-377 are each glycosylated (N-linked (GlcNAc...) asparagine). Asp-434 is an active-site residue. Asn-440 and Asn-448 each carry an N-linked (GlcNAc...) asparagine glycan. His-503 is an active-site residue.

This sequence belongs to the peptidase S10 family.

Its subcellular location is the secreted. Its function is as follows. Removes acidic, neutral and basic amino acids as well as proline from the C-terminal position. This Arthroderma benhamiae (strain ATCC MYA-4681 / CBS 112371) (Trichophyton mentagrophytes) protein is Probable serine carboxypeptidase ARB_06414.